We begin with the raw amino-acid sequence, 322 residues long: Thioredoxin reductase (322 aa).

Residues 12–15 (SGPA), 34–42 (EGAVTAGGA), Asn-51, and Val-84 each bind FAD. Cysteines 136 and 139 form a disulfide. NADP(+) is bound by residues His-176, Arg-182, Ile-239, and Tyr-259. Residues Asp-279 and 286-289 (RQAI) each bind FAD. Residue Arg-286 coordinates NADP(+).

This sequence belongs to the class-II pyridine nucleotide-disulfide oxidoreductase family. In terms of assembly, homodimer. FAD serves as cofactor.

The protein resides in the cytoplasm. It carries out the reaction [thioredoxin]-dithiol + NADP(+) = [thioredoxin]-disulfide + NADPH + H(+). The polypeptide is Thioredoxin reductase (Streptomyces coelicolor (strain ATCC BAA-471 / A3(2) / M145)).